The primary structure comprises 634 residues: Sodium-dependent neutral amino acid transporter B(0)AT1 (634 aa).

At 1–41 (MVRLVLPNPGLDARIPSLAELETIEQEEASSRPKWDNKAQY) the chain is on the cytoplasmic side. Serine 17 is modified (phosphoserine). The helical transmembrane segment at 42–62 (MLTCLGFCVGLGNVWRFPYLC) threads the bilayer. Topologically, residues 63–67 (QSHGG) are extracellular. The chain crosses the membrane as a helical span at residues 68–88 (GAFMIPFLILLVLEGIPLLYL). The Cytoplasmic segment spans residues 89–120 (EFAIGQRLRRGSLGVWSSIHPALKGLGLASML). A helical membrane pass occupies residues 121 to 141 (TSFMVGLYYNTIISWIMWYLF). Over 142–192 (NSFQEPLPWSDCPLNENQTGYVDECARSSPVDYFWYRETLNISTSISDSGS) the chain is Extracellular. N-linked (GlcNAc...) asparagine glycans are attached at residues asparagine 158 and asparagine 182. Residues 193–213 (IQWWMLLCLACAWSVLYMCTI) traverse the membrane as a helical segment. Residues 214-221 (RGIETTGK) are Cytoplasmic-facing. Residues 222–242 (AVYITSTLPYVVLTIFLIRGL) form a helical membrane-spanning segment. Residues 243-268 (TLKGATNGIVFLFTPNVTELAQPDTW) lie on the Extracellular side of the membrane. Asparagine 258 carries an N-linked (GlcNAc...) asparagine glycan. Residues 269-289 (LDAGAQVFFSFSLAFGGLISF) traverse the membrane as a helical segment. At 290 to 304 (SSYNSVHNNCEKDSV) the chain is on the cytoplasmic side. The chain crosses the membrane as a helical span at residues 305-325 (IVSIINGFTSVYVAIVVYSVI). Residues 326 to 413 (GFRATQRYDD…TEAITKMPLS (88 aa)) lie on the Extracellular side of the membrane. 2 N-linked (GlcNAc...) asparagine glycosylation sites follow: asparagine 354 and asparagine 368. A helical membrane pass occupies residues 414 to 434 (PLWSVLFFIMLFCLGLSSMFG). The Cytoplasmic segment spans residues 435–456 (NMEGVVVPLQDLRVIPPKWPKE). A helical transmembrane segment spans residues 457–477 (VLTGLICLGTFLIGFIFTLNS). Over 478–490 (GQYWLSLLDSYAG) the chain is Extracellular. Residues 491–511 (SIPLLIIAFCEMFSVVYVYGV) traverse the membrane as a helical segment. Residues 512–531 (DRFNKDIEFMIGHKPNIFWQ) are Cytoplasmic-facing. The chain crosses the membrane as a helical span at residues 532–552 (VTWRVVSPLLMLIIFLFFFVV). At 553–581 (EVSQELTYSIWDPGYEEFPKSQKISYPNW) the chain is on the extracellular side. The chain crosses the membrane as a helical span at residues 582 to 602 (VYVVVVIVAGVPSLTIPGYAI). The Cytoplasmic portion of the chain corresponds to 603 to 634 (YKLIRNHCQKPGDHQGLVSTLSTASMNGDLKY). Serine 627 carries the phosphoserine modification.

The protein belongs to the sodium:neurotransmitter symporter (SNF) (TC 2.A.22) family. SLC6A19 subfamily. In terms of assembly, interacts in a tissue-specific manner with ACE2 in small intestine and with CLTRN in the kidney. Interacts with CLTRN; this interaction is required for trafficking of SLC6A19 to the plasma membrane and for its catalytic activation in kidneys. Interacts with ACE2; this interaction is required for trafficking of SLC6A19 to the plasma membrane and for its catalytic activation in intestine. Interacts with ANPEP; the interaction positively regulates its amino acid transporter activity. In terms of tissue distribution, robust expression in kidney and small intestine, with minimal expression in pancreas. Also expressed in stomach, liver, duodenum, ileocecum, colon and prostate. Not detected in testis, whole brain, cerebellum, fetal liver, spleen, skeletal muscle, uterus, heart or lung.

Its subcellular location is the cell membrane. It localises to the apical cell membrane. The enzyme catalyses L-alanine(in) + Na(+)(in) = L-alanine(out) + Na(+)(out). It carries out the reaction L-cysteine(in) + Na(+)(in) = L-cysteine(out) + Na(+)(out). The catalysed reaction is L-glutamine(in) + Na(+)(in) = L-glutamine(out) + Na(+)(out). It catalyses the reaction glycine(in) + Na(+)(in) = glycine(out) + Na(+)(out). The enzyme catalyses L-isoleucine(in) + Na(+)(in) = L-isoleucine(out) + Na(+)(out). It carries out the reaction L-leucine(in) + Na(+)(in) = L-leucine(out) + Na(+)(out). The catalysed reaction is L-methionine(in) + Na(+)(in) = L-methionine(out) + Na(+)(out). It catalyses the reaction L-phenylalanine(in) + Na(+)(in) = L-phenylalanine(out) + Na(+)(out). The enzyme catalyses L-serine(in) + Na(+)(in) = L-serine(out) + Na(+)(out). It carries out the reaction L-tryptophan(in) + Na(+)(in) = L-tryptophan(out) + Na(+)(out). The catalysed reaction is L-tyrosine(in) + Na(+)(in) = L-tyrosine(out) + Na(+)(out). It catalyses the reaction L-valine(in) + Na(+)(in) = L-valine(out) + Na(+)(out). Its function is as follows. Transporter that mediates resorption of neutral amino acids across the apical membrane of renal and intestinal epithelial cells. This uptake is sodium-dependent and chloride-independent. Requires CLTRN in kidney or ACE2 in intestine for cell surface expression and amino acid transporter activity. The polypeptide is Sodium-dependent neutral amino acid transporter B(0)AT1 (SLC6A19) (Homo sapiens (Human)).